A 494-amino-acid chain; its full sequence is Cytochrome P450 2G1 (494 aa).

Cys-439 is a heme binding site.

Belongs to the cytochrome P450 family. The cofactor is heme. As to expression, olfactory epithelium.

It localises to the endoplasmic reticulum membrane. The protein localises to the microsome membrane. The enzyme catalyses an organic molecule + reduced [NADPH--hemoprotein reductase] + O2 = an alcohol + oxidized [NADPH--hemoprotein reductase] + H2O + H(+). Functionally, cytochromes P450 are a group of heme-thiolate monooxygenases. This isozyme seems to be implicated in olfaction. This Rattus norvegicus (Rat) protein is Cytochrome P450 2G1 (Cyp2g1).